The chain runs to 574 residues: Developmental and secondary metabolism regulator veA (574 aa).

Disordered regions lie at residues 1 to 22 (MATRAPLAPPPNETEASVSRIT), 39 to 60 (ERARACGAGAKSSADRRPVDPP), 255 to 500 (RSSD…GAGK), and 513 to 548 (RSYEDSFGHDDRPLYNGMRPDTESHPRRLSDAGRNF). One can recognise a Velvet domain in the interval 25-230 (GKKLTYKLNV…AEQGCRVRIR (206 aa)). The short motif at 39-44 (ERARAC) is the Nuclear localization signal element. 2 stretches are compositionally biased toward pro residues: residues 314-323 (RPMPPAPVPA) and 330-341 (PAPPAPPAPPSH). Polar residues-rich tracts occupy residues 343–359 (PGYQSHLSFGSTQTQYP), 385–394 (HARNPSTSAE), 402–415 (YPSSRVSTERSSYP), and 448–458 (VAQSAGPRSQT). Residues 457 to 501 (QTPSSSLVPSLPPLKALSGDYPNNLSQPSSSISQSPSHDLGAGKK) form a PEST region. Composition is skewed to low complexity over residues 459–474 (PSSSLVPSLPPLKALS) and 482–493 (SQPSSSISQSPS). Basic and acidic residues-rich tracts occupy residues 513 to 525 (RSYEDSFGHDDRP) and 532 to 543 (PDTESHPRRLSD).

Belongs to the velvet family. VeA subfamily. In terms of assembly, component of the heterotrimeric velvet complex composed of laeA, veA and velB; VeA acting as a bridging protein between laeA and velB.

It localises to the nucleus. The protein localises to the cytoplasm. Its function is as follows. Component of the velvet transcription factor complex that controls sexual/asexual developmental ratio in response to light, promoting sexual development in the darkness while stimulating asexual sporulation under illumination. The velvet complex hat acts as a global regulator for secondary metabolite gene expression. Controls the expression of the aflatoxin gene cluster. Required for the expression of aflR and aflJ. Mediates the coordination of aflatoxigenic vesicles (aflatoxisomes) development with aflatoxin gene expression. Regulates branched chain amino acid and ethanol metabolism and acts as a positive regulator of mitochondrial and peroxisomal beta-oxidation. This Aspergillus parasiticus protein is Developmental and secondary metabolism regulator veA.